Here is a 390-residue protein sequence, read N- to C-terminus: Lipid-A-disaccharide synthase (390 aa).

Belongs to the LpxB family.

It carries out the reaction a lipid X + a UDP-2-N,3-O-bis[(3R)-3-hydroxyacyl]-alpha-D-glucosamine = a lipid A disaccharide + UDP + H(+). Its pathway is bacterial outer membrane biogenesis; LPS lipid A biosynthesis. Condensation of UDP-2,3-diacylglucosamine and 2,3-diacylglucosamine-1-phosphate to form lipid A disaccharide, a precursor of lipid A, a phosphorylated glycolipid that anchors the lipopolysaccharide to the outer membrane of the cell. This Haemophilus ducreyi (strain 35000HP / ATCC 700724) protein is Lipid-A-disaccharide synthase.